Here is a 138-residue protein sequence, read N- to C-terminus: Large ribosomal subunit protein eL32 (138 aa).

Belongs to the eukaryotic ribosomal protein eL32 family.

The chain is Large ribosomal subunit protein eL32 from Saccharolobus islandicus (strain Y.N.15.51 / Yellowstone #2) (Sulfolobus islandicus).